We begin with the raw amino-acid sequence, 287 residues long: Ribosomal RNA small subunit methyltransferase A (287 aa).

S-adenosyl-L-methionine is bound by residues N28, L30, G55, E76, D101, and N125.

Belongs to the class I-like SAM-binding methyltransferase superfamily. rRNA adenine N(6)-methyltransferase family. RsmA subfamily.

The protein localises to the cytoplasm. The enzyme catalyses adenosine(1518)/adenosine(1519) in 16S rRNA + 4 S-adenosyl-L-methionine = N(6)-dimethyladenosine(1518)/N(6)-dimethyladenosine(1519) in 16S rRNA + 4 S-adenosyl-L-homocysteine + 4 H(+). Functionally, specifically dimethylates two adjacent adenosines (A1518 and A1519) in the loop of a conserved hairpin near the 3'-end of 16S rRNA in the 30S particle. May play a critical role in biogenesis of 30S subunits. The sequence is that of Ribosomal RNA small subunit methyltransferase A from Alkaliphilus oremlandii (strain OhILAs) (Clostridium oremlandii (strain OhILAs)).